The following is a 518-amino-acid chain: Serine/threonine-protein kinase UL13 (518 aa).

Disordered stretches follow at residues 1–22 (MDES…PQGA) and 39–120 (SRRA…PSPP). A compositionally biased stretch (low complexity) spans 44–61 (GRPSGPSPRDGAVSGARP). Residues 151–518 (PGARSFGGSG…ANPAARHSLS (368 aa)) enclose the Protein kinase domain. ATP is bound by residues 157 to 165 (GGSGGYGEV) and Lys-176. Asp-277 (proton acceptor) is an active-site residue.

Belongs to the protein kinase superfamily. Ser/Thr protein kinase family. Autophosphorylated.

It is found in the virion tegument. Its subcellular location is the host nucleus. It catalyses the reaction L-seryl-[protein] + ATP = O-phospho-L-seryl-[protein] + ADP + H(+). The enzyme catalyses L-threonyl-[protein] + ATP = O-phospho-L-threonyl-[protein] + ADP + H(+). Its function is as follows. Multifunctional serine/threonine kinase that plays a role in several processes including egress of virus particles from the nucleus, modulation of the actin cytoskeleton and regulation of viral and cellular gene expression. Regulates the nuclear localization of viral envelopment factors UL34 and UL31, by phosphorylating the US3 kinase, indicating a role in nuclear egress. Disrupts host nuclear lamins, including LMNA and LMNB1. Phosphorylates the viral Fc receptor composed of glycoproteins E (gE) and I (gI). Phosphorylation of glycoprotein E (gE) by UL13 alters its subcellular localization, from the host early endosome to the plasma membrane. Participates in the transcriptional regulation of cellular and viral mRNAs mainly by phosphorylating the viral transcriptional regulator ICP22. Additional substrates have been identified, including UL41, UL49 or host EF1D. The chain is Serine/threonine-protein kinase UL13 from Homo sapiens (Human).